We begin with the raw amino-acid sequence, 262 residues long: Hydroxyethylthiazole kinase (262 aa).

Methionine 50 provides a ligand contact to substrate. Arginine 125 and threonine 171 together coordinate ATP. Glycine 198 lines the substrate pocket.

It belongs to the Thz kinase family. Mg(2+) serves as cofactor.

The enzyme catalyses 5-(2-hydroxyethyl)-4-methylthiazole + ATP = 4-methyl-5-(2-phosphooxyethyl)-thiazole + ADP + H(+). The protein operates within cofactor biosynthesis; thiamine diphosphate biosynthesis; 4-methyl-5-(2-phosphoethyl)-thiazole from 5-(2-hydroxyethyl)-4-methylthiazole: step 1/1. In terms of biological role, catalyzes the phosphorylation of the hydroxyl group of 4-methyl-5-beta-hydroxyethylthiazole (THZ). This is Hydroxyethylthiazole kinase from Citrobacter koseri (strain ATCC BAA-895 / CDC 4225-83 / SGSC4696).